The sequence spans 617 residues: Autophagy-related protein 20 (617 aa).

The disordered stretch occupies residues 1–83 (MWNDEDNNPY…KRKPGGYDSR (83 aa)). A compositionally biased stretch (low complexity) spans 20–31 (QSSSINPTSPST). Residues 48 to 58 (DNEHNHGVIHD) are compositionally biased toward basic and acidic residues. The segment covering 59–68 (DSDDDDEDLT) has biased composition (acidic residues). The 121-residue stretch at 89 to 209 (YENPKLSILI…RFFDPNASWS (121 aa)) folds into the PX domain. A 1,2-diacyl-sn-glycero-3-phospho-(1D-myo-inositol-3-phosphate)-binding residues include Arg126, Ser128, Lys152, and Arg175. A coiled-coil region spans residues 403–440 (QQDLTTEELSKKRALLDQLEQSEAEARRIENYLSSSQQ). The interval 434–516 (YLSSSQQISP…SGNSITNKIF (83 aa)) is disordered. Basic and acidic residues predominate over residues 454-463 (PPSHQRRDGS). The segment covering 480–500 (DFSSHTPSASQGLPERSTSVP) has biased composition (polar residues).

It belongs to the sorting nexin family. As to quaternary structure, forms a complex with SNX4/ATG24 and ATG17.

It is found in the endosome membrane. The protein resides in the preautophagosomal structure membrane. In terms of biological role, required for cytoplasm to vacuole transport (Cvt), pexophagy and mitophagy. Also involved in endoplasmic reticulum-specific autophagic process and is essential for the survival of cells subjected to severe ER stress. Functions in protein retrieval from the endocytic pathway. Required for proper sorting of the v-SNARE protein SNC1. Autophagy is required for proper vegetative growth, asexual/sexual reproduction, and full virulence. Autophagy is particularly involved in the biosynthesis of deoxynivalenol (DON), an important virulence determinant. This Gibberella zeae (strain ATCC MYA-4620 / CBS 123657 / FGSC 9075 / NRRL 31084 / PH-1) (Wheat head blight fungus) protein is Autophagy-related protein 20.